We begin with the raw amino-acid sequence, 511 residues long: Maturase K (511 aa).

Belongs to the intron maturase 2 family. MatK subfamily.

Its subcellular location is the plastid. The protein resides in the chloroplast. Usually encoded in the trnK tRNA gene intron. Probably assists in splicing its own and other chloroplast group II introns. This Brachypodium sylvaticum (False brome) protein is Maturase K.